We begin with the raw amino-acid sequence, 323 residues long: o-succinylbenzoate synthase (323 aa).

Lysine 134 acts as the Proton donor in catalysis. Mg(2+)-binding residues include aspartate 162, glutamate 191, and aspartate 214. The active-site Proton acceptor is lysine 236.

It belongs to the mandelate racemase/muconate lactonizing enzyme family. MenC type 1 subfamily. It depends on a divalent metal cation as a cofactor.

The enzyme catalyses (1R,6R)-6-hydroxy-2-succinyl-cyclohexa-2,4-diene-1-carboxylate = 2-succinylbenzoate + H2O. It participates in quinol/quinone metabolism; 1,4-dihydroxy-2-naphthoate biosynthesis; 1,4-dihydroxy-2-naphthoate from chorismate: step 4/7. The protein operates within quinol/quinone metabolism; menaquinone biosynthesis. In terms of biological role, converts 2-succinyl-6-hydroxy-2,4-cyclohexadiene-1-carboxylate (SHCHC) to 2-succinylbenzoate (OSB). This Yersinia pseudotuberculosis serotype IB (strain PB1/+) protein is o-succinylbenzoate synthase.